A 244-amino-acid chain; its full sequence is Protein DCG1 (244 aa).

It belongs to the HyuE racemase family.

In Saccharomyces cerevisiae (strain ATCC 204508 / S288c) (Baker's yeast), this protein is Protein DCG1 (DCG1).